The primary structure comprises 2223 residues: Sperm-associated antigen 17 (2223 aa).

2 stretches are compositionally biased toward basic and acidic residues: residues 144-172 (RENE…EKKA) and 200-212 (RRGE…RYID). Positions 144–214 (RENEKKVIED…DHTNRYIDDE (71 aa)) are disordered. The stretch at 266–295 (NQQQEVLLQSEDLEAEKLKKENAIKELKTF) forms a coiled coil. Disordered stretches follow at residues 387-416 (MPTS…PPPV), 680-710 (MSVQ…LNNL), 731-762 (PQHE…PKKM), 950-1015 (EERL…EPKI), 1179-1212 (GKIK…PEPV), and 1345-1378 (ETIP…PPPE). Composition is skewed to basic and acidic residues over residues 743–756 (EIKD…DSHE), 950–999 (EERL…EQVK), and 1182–1205 (KGKE…KKEE). Positions 940 to 966 (WKEEQHRLAEEERLREEKKAEKKGKEA) form a coiled coil. Polar residues predominate over residues 1345-1354 (ETIPSEITNT). The stretch at 1874 to 1907 (RHTASSKRWKEKIDKTRKEIETTQNYLMDIKNRI) forms a coiled coil. Disordered regions lie at residues 1938–1957 (TKKN…DLNL) and 1962–2008 (HKVS…SYEP). Over residues 1988 to 1998 (TAQNQTENLTK) the composition is skewed to polar residues.

Interacts (via the C-terminus) with SPAG6; the interaction probably occurs on polymerized microtubules. Highly expressed in testis. Expressed in organs that contain cilia-bearing cells including brain, oviduct, lung, and uterus.

Its subcellular location is the cytoplasm. It localises to the cytoskeleton. It is found in the flagellum axoneme. The protein resides in the cytoplasmic vesicle. The protein localises to the secretory vesicle. Its subcellular location is the acrosome. It localises to the golgi apparatus. In terms of biological role, component of the central pair apparatus of ciliary axonemes. Plays a critical role in the function and structure of motile cilia. May play a role in endochondral bone formation, most likely because of a function in primary cilia of chondrocytes and osteoblasts. Essential for normal spermatogenesis and male fertility. Required for normal manchette structure, transport of proteins along the manchette microtubules and formation of the sperm head and flagellum. Essential for sperm flagellum development and proper assembly of the respiratory motile cilia central pair apparatus, but not the brain ependymal cilia. This Homo sapiens (Human) protein is Sperm-associated antigen 17 (SPAG17).